Consider the following 182-residue polypeptide: ATP-dependent protease subunit HslV (182 aa).

Thr-12 is a catalytic residue. Residues Ala-167, Cys-170, and Thr-173 each contribute to the Na(+) site.

Belongs to the peptidase T1B family. HslV subfamily. As to quaternary structure, a double ring-shaped homohexamer of HslV is capped on each side by a ring-shaped HslU homohexamer. The assembly of the HslU/HslV complex is dependent on binding of ATP.

It localises to the cytoplasm. It carries out the reaction ATP-dependent cleavage of peptide bonds with broad specificity.. Allosterically activated by HslU binding. In terms of biological role, protease subunit of a proteasome-like degradation complex believed to be a general protein degrading machinery. The chain is ATP-dependent protease subunit HslV from Chlorobium phaeobacteroides (strain DSM 266 / SMG 266 / 2430).